The following is a 266-amino-acid chain: Putative pyruvate, phosphate dikinase regulatory protein (266 aa).

147 to 154 (GLSRTSKT) lines the ADP pocket.

Belongs to the pyruvate, phosphate/water dikinase regulatory protein family. PDRP subfamily.

It carries out the reaction N(tele)-phospho-L-histidyl/L-threonyl-[pyruvate, phosphate dikinase] + ADP = N(tele)-phospho-L-histidyl/O-phospho-L-threonyl-[pyruvate, phosphate dikinase] + AMP + H(+). The catalysed reaction is N(tele)-phospho-L-histidyl/O-phospho-L-threonyl-[pyruvate, phosphate dikinase] + phosphate + H(+) = N(tele)-phospho-L-histidyl/L-threonyl-[pyruvate, phosphate dikinase] + diphosphate. In terms of biological role, bifunctional serine/threonine kinase and phosphorylase involved in the regulation of the pyruvate, phosphate dikinase (PPDK) by catalyzing its phosphorylation/dephosphorylation. This Clostridium perfringens (strain 13 / Type A) protein is Putative pyruvate, phosphate dikinase regulatory protein.